A 456-amino-acid chain; its full sequence is Glycosyl hydrolase family 109 protein 2 (456 aa).

A signal peptide (tat-type signal) is located at residues 1–33 (MSGFDRRSFLKASMVTAAATALAACASSERATG). Residues 63–64 (ER), D85, 134–137 (WAWH), 154–155 (EV), and N183 each bind NAD(+). Residues Y212, R231, 243 to 246 (YPTH), and Y325 contribute to the substrate site. Position 243 (Y243) interacts with NAD(+).

The protein belongs to the Gfo/Idh/MocA family. Glycosyl hydrolase 109 subfamily. NAD(+) serves as cofactor. Predicted to be exported by the Tat system. The position of the signal peptide cleavage has not been experimentally proven.

Its function is as follows. Glycosidase. This chain is Glycosyl hydrolase family 109 protein 2, found in Shewanella sp. (strain MR-4).